The chain runs to 174 residues: Protein PopB (174 aa).

Positions 1–174 are disordered; that stretch reads MSHSKIKAGG…EAMKIKDDDD (174 aa). The segment covering 50–65 has biased composition (polar residues); that stretch reads LNKSNLGSDSQTWTPG. Over residues 66 to 78 the composition is skewed to low complexity; that stretch reads STMVSLKSRSSSS. Residues 79–89 are compositionally biased toward basic and acidic residues; the sequence is HKPDTGGDTKP. Positions 147 to 161 are enriched in low complexity; the sequence is IALQRAIQRQTQTRQ. Residues 162–174 are compositionally biased toward basic and acidic residues; it reads KMQEAMKIKDDDD.

It localises to the secreted. Functionally, probably involved in host-pathogen interactions. The protein is Protein PopB (popB) of Ralstonia nicotianae (strain ATCC BAA-1114 / GMI1000) (Ralstonia solanacearum).